The sequence spans 471 residues: Probable ribonuclease FAU-1 (471 aa).

It belongs to the FAU-1 family.

Its function is as follows. Probable RNase involved in rRNA stability through maturation and/or degradation of precursor rRNAs. Binds to RNA in loop regions with AU-rich sequences. The sequence is that of Probable ribonuclease FAU-1 from Thermococcus gammatolerans (strain DSM 15229 / JCM 11827 / EJ3).